We begin with the raw amino-acid sequence, 432 residues long: Histidine--tRNA ligase (432 aa).

The disordered stretch occupies residues 412-432; it reads TQVPLAAFPPEEGRPTYDDYA. Residues 422-432 show a composition bias toward basic and acidic residues; the sequence is EEGRPTYDDYA.

This sequence belongs to the class-II aminoacyl-tRNA synthetase family.

It localises to the cytoplasm. It carries out the reaction tRNA(His) + L-histidine + ATP = L-histidyl-tRNA(His) + AMP + diphosphate + H(+). This Natronomonas pharaonis (strain ATCC 35678 / DSM 2160 / CIP 103997 / JCM 8858 / NBRC 14720 / NCIMB 2260 / Gabara) (Halobacterium pharaonis) protein is Histidine--tRNA ligase.